The sequence spans 106 residues: Transcriptional and immune response regulator (106 aa).

In terms of assembly, monomer. Interacts with NOTCH2 (via ANK repeats), the interaction inhibits the nuclear translocation of NOTCH2 N2ICD. Interacts (C-terminus) with CBY1 (C-terminus), TCIM competes with CTNNB1 for the interaction with CBY1. In terms of tissue distribution, expressed in liver, expression levels decrease in regenerating liver. In bone marrow, expressed in large progenitor-like cells, cells with ring-shaped nuclei and, at lower, levels in hematopietic stem cell-like cells with round nuclei (at protein level).

The protein resides in the cytoplasm. The protein localises to the nucleus. It localises to the nucleolus. Its subcellular location is the nucleus speckle. Seems to be involved in the regulation of cell growth an differentiation, may play different and opposite roles depending on the tissue or cell type. May enhance the WNT-CTNNB1 pathway by relieving antagonistic activity of CBY1. Enhances the proliferation of follicular dendritic cells. Plays a role in the mitogen-activated MAPK2/3 signaling pathway, positively regulates G1-to-S-phase transition of the cell cycle. In endothelial cells, enhances key inflammatory mediators and inflammatory response through the modulation of NF-kappaB transcriptional regulatory activity. Involved in the regulation of heat shock response, seems to play a positive feedback with HSF1 to modulate heat-shock downstream gene expression. Plays a role in the regulation of hematopoiesis even if the mechanisms are unknown. In cancers such as thyroid or lung cancer, it has been described as promoter of cell proliferation, G1-to-S-phase transition and inhibitor of apoptosis. However, it negatively regulates self-renewal of liver cancer cells via suppresion of NOTCH2 signaling. In Mus musculus (Mouse), this protein is Transcriptional and immune response regulator.